Consider the following 95-residue polypeptide: Integration host factor subunit beta (95 aa).

The tract at residues 56–76 (RAPRTGRNPKTGTSVDLDGKY) is disordered.

It belongs to the bacterial histone-like protein family. In terms of assembly, heterodimer of an alpha and a beta chain.

This protein is one of the two subunits of integration host factor, a specific DNA-binding protein that functions in genetic recombination as well as in transcriptional and translational control. The sequence is that of Integration host factor subunit beta from Shewanella sediminis (strain HAW-EB3).